The sequence spans 148 residues: Suppressor APC domain-containing protein 1 (148 aa).

Residues 120-148 form a disordered region; the sequence is SRQQKGVTQPKEEMAQRGCTKGPRGPTRV.

The protein is Suppressor APC domain-containing protein 1 (SAPCD1) of Homo sapiens (Human).